Reading from the N-terminus, the 231-residue chain is Large ribosomal subunit protein uL1 (231 aa).

It belongs to the universal ribosomal protein uL1 family. In terms of assembly, part of the 50S ribosomal subunit.

Its function is as follows. Binds directly to 23S rRNA. The L1 stalk is quite mobile in the ribosome, and is involved in E site tRNA release. Functionally, protein L1 is also a translational repressor protein, it controls the translation of the L11 operon by binding to its mRNA. This is Large ribosomal subunit protein uL1 from Pseudomonas aeruginosa (strain LESB58).